The chain runs to 426 residues: Antigen EM13 (426 aa).

The F-BAR domain maps to 1–240; that stretch reads MIQERADIEK…TVAKVDADAD (240 aa). 2 disordered regions span residues 287–315 and 350–369; these read LTSL…ISTS and ISKE…FVDD. Residues 305–315 are compositionally biased toward polar residues; it reads TTDSGSNISTS. One can recognise an SH3 domain in the interval 371–426; sequence RPGVPIRALYDYVGVEADELSFNSGDLFEKLEDEDEQGWCKGRKDGRVGLYPRQLR.

The chain is Antigen EM13 (EM13) from Echinococcus multilocularis (Fox tapeworm).